The chain runs to 449 residues: MNYKNKILVSESGLTQKHLIHGDEELFQHELRTIXARNWLFLTHDSLIPSPGDYVTAKMGIDEVIVSRQSDGSIRAFLNVCRHRGKTLVNAEAGNAKGFVCSYHGWGFGSNGELQSVPFEKELYGESLNKKCLGLKEVARVESFHGFIYGCFDQEAPSLMDYLGDAAWYLEPIFKHSGGLELVGPPGKVVIKANWKAPAENFVGDAYHVGWTHASSLRTGESIFSSLAGNAVLPPEGAGLQMTSKYGSGMGVLWDGYSGVHSADLVPELMAFGGAKQERLNKEIGDVPARIYRSHLNCTVFPNNSVLTCSGVFKVWNPIDANTTEVWTYAIVEKDMPEDLKRRLADAVQRTFGPAGFWESDDNDNMETASQNGKKYQSRDSDLISNLGFGKDVYGDAVYPGVVGKSAIGETSYRGFYRAYQAHVSSSNWAEFEDASSTWHTELTKTTDR.

In terms of domain architecture, Rieske spans 39-137 (WLFLTHDSLI…LNKKCLGLKE (99 aa)). The [2Fe-2S] cluster site is built by Cys81, His83, Cys101, and His104. His208, His213, and Asp362 together coordinate Fe cation.

The protein belongs to the bacterial ring-hydroxylating dioxygenase alpha subunit family. As to quaternary structure, the naphthalene dioxygenase (NDO) multicomponent enzyme system is composed of an electron transfer component and a dioxygenase component (iron sulfur protein (ISP)). The electron transfer component is composed of a ferredoxin reductase (NdoR) and a ferredoxin (NdoA), and the dioxygenase component is formed of a heterohexamer (trimer of heterodimers) of three large alpha subunits (NdoB) and three small beta subunits (NdoC). The cofactor is [2Fe-2S] cluster. Requires Fe(2+) as cofactor.

The enzyme catalyses naphthalene + NADH + O2 + H(+) = (1R,2S)-1,2-dihydronaphthalene-1,2-diol + NAD(+). Its pathway is aromatic compound metabolism; naphthalene degradation. Its function is as follows. Component of the naphthalene dioxygenase (NDO) multicomponent enzyme system which catalyzes the incorporation of both atoms of molecular oxygen into naphthalene to form cis-(1R,2S)-dihydroxy-1,2-dihydronaphthalene. The alpha subunit has a catalytic role in the holoenzyme. The chain is Naphthalene 1,2-dioxygenase system, large oxygenase component from Pseudomonas fluorescens.